A 190-amino-acid polypeptide reads, in one-letter code: Elongation factor P (190 aa).

This sequence belongs to the elongation factor P family.

The protein localises to the cytoplasm. The protein operates within protein biosynthesis; polypeptide chain elongation. Its function is as follows. Involved in peptide bond synthesis. Stimulates efficient translation and peptide-bond synthesis on native or reconstituted 70S ribosomes in vitro. Probably functions indirectly by altering the affinity of the ribosome for aminoacyl-tRNA, thus increasing their reactivity as acceptors for peptidyl transferase. This is Elongation factor P from Sulfurihydrogenibium sp. (strain YO3AOP1).